A 490-amino-acid chain; its full sequence is Cheilanthifoline synthase (490 aa).

The helical transmembrane segment at 2 to 22 threads the bilayer; it reads EESLWVVTATVVVVFAIAKLL. Residue Cys432 participates in heme binding.

Belongs to the cytochrome P450 family. Heme is required as a cofactor. As to expression, expressed in roots. Detected in leaves and stems.

The protein localises to the endoplasmic reticulum membrane. It catalyses the reaction (S)-scoulerine + reduced [NADPH--hemoprotein reductase] + O2 = (S)-cheilanthifoline + oxidized [NADPH--hemoprotein reductase] + 2 H2O + H(+). It functions in the pathway alkaloid biosynthesis. In terms of biological role, methylenedioxy bridge-forming cytochrome P450 involved in the biosynthesis of isoquinoline alkaloids. Converts (S)-scoulerine into (R,S)-cheilanthifoline. Catalyzes an oxidative reaction that does not incorporate oxygen into the product. The chain is Cheilanthifoline synthase (CYP719A5) from Eschscholzia californica (California poppy).